The following is a 272-amino-acid chain: Probable nitrilase C965.09 (272 aa).

The region spanning 3–244 (ANIACVQMAP…EGVISYTVDL (242 aa)) is the CN hydrolase domain. Catalysis depends on Glu-45, which acts as the Proton acceptor. The active-site Proton donor is Lys-118. The Nucleophile role is filled by Cys-150.

The protein belongs to the carbon-nitrogen hydrolase superfamily.

Its subcellular location is the cytoplasm. It is found in the nucleus. The chain is Probable nitrilase C965.09 from Schizosaccharomyces pombe (strain 972 / ATCC 24843) (Fission yeast).